Here is a 402-residue protein sequence, read N- to C-terminus: Propionate kinase (402 aa).

ATP-binding residues include N11 and K18. Position 11 (N11) interacts with Mg(2+). R86 is a binding site for substrate. D143 (proton donor/acceptor) is an active-site residue. Residues H175, 203–207 (HLGNG), 278–280 (DLR), and 326–330 (GIGEN) each bind ATP.

The protein belongs to the acetokinase family. TdcD subfamily. As to quaternary structure, homodimer. Mg(2+) serves as cofactor.

It carries out the reaction propanoate + ATP = propanoyl phosphate + ADP. It participates in amino-acid degradation; L-threonine degradation via propanoate pathway; propanoate from L-threonine: step 4/4. Functionally, catalyzes the conversion of propionyl phosphate and ADP to propionate and ATP. The protein is Propionate kinase of Escherichia coli O6:H1 (strain CFT073 / ATCC 700928 / UPEC).